Here is a 256-residue protein sequence, read N- to C-terminus: tRNA (guanine-N(7)-)-methyltransferase (256 aa).

Residues 1–25 form a disordered region; that stretch reads MVATGGQAQDQSQNQEPDVLNPTSA. S-adenosyl-L-methionine is bound by residues G79, 102-103, 137-138, and L157; these read EI and NA. Residue D160 is part of the active site. Position 235–237 (235–237) interacts with S-adenosyl-L-methionine; that stretch reads SEE.

The protein belongs to the class I-like SAM-binding methyltransferase superfamily. TrmB family.

It is found in the nucleus. It carries out the reaction guanosine(46) in tRNA + S-adenosyl-L-methionine = N(7)-methylguanosine(46) in tRNA + S-adenosyl-L-homocysteine. It functions in the pathway tRNA modification; N(7)-methylguanine-tRNA biosynthesis. In terms of biological role, catalyzes the formation of N(7)-methylguanine at position 46 (m7G46) in tRNA. In Drosophila simulans (Fruit fly), this protein is tRNA (guanine-N(7)-)-methyltransferase.